The following is a 124-amino-acid chain: MATVNQLVRKPRVRKVIKSNVPALGKSPQKRGVCTRVYTTTPKKPNSALRKVCRVRLTNGFEVTAYIGGEGHNLQEHSVILIRGGRVKDLPGVRYHIVRGSLDCAGVKERKQGRSKYGVKKPKK.

Position 89 is a 3-methylthioaspartic acid (aspartate 89).

It belongs to the universal ribosomal protein uS12 family. In terms of assembly, part of the 30S ribosomal subunit. Contacts proteins S8 and S17. May interact with IF1 in the 30S initiation complex.

In terms of biological role, with S4 and S5 plays an important role in translational accuracy. Functionally, interacts with and stabilizes bases of the 16S rRNA that are involved in tRNA selection in the A site and with the mRNA backbone. Located at the interface of the 30S and 50S subunits, it traverses the body of the 30S subunit contacting proteins on the other side and probably holding the rRNA structure together. The combined cluster of proteins S8, S12 and S17 appears to hold together the shoulder and platform of the 30S subunit. This is Small ribosomal subunit protein uS12 from Buchnera aphidicola subsp. Acyrthosiphon pisum (strain 5A).